The chain runs to 591 residues: PDZ and LIM domain protein 5 (591 aa).

Ser2 carries the post-translational modification N-acetylserine. Ser2 carries the post-translational modification Phosphoserine. The region spanning 2-85 (SNYNVSLVGP…SLNMTLQRAS (84 aa)) is the PDZ domain. Lys89 is subject to N6-acetyllysine; alternate. Lys89 carries the post-translational modification N6-succinyllysine; alternate. Lys89 participates in a covalent cross-link: Glycyl lysine isopeptide (Lys-Gly) (interchain with G-Cter in SUMO2); alternate. Phosphoserine occurs at positions 111, 134, and 137. Disordered stretches follow at residues 125 to 240 (YNKV…GPPR) and 255 to 334 (THSD…SNRP). Residues 134–143 (SVSSPKVTSI) are compositionally biased toward polar residues. Residues 144–161 (PSPSSAFTPAHAATSSHA) show a composition bias toward low complexity. Over residues 162 to 174 (SPPPVAAVTPPPL) the composition is skewed to pro residues. 2 stretches are compositionally biased toward polar residues: residues 183–195 (ANPS…SPPN) and 207–217 (PTVTSVCSESA). Phosphoserine occurs at positions 228 and 260. 2 stretches are compositionally biased toward basic and acidic residues: residues 258–273 (DASK…DWRP) and 293–304 (EHLKESENDNAK). Residues 310–329 (PEPSQQSASPLSAAESLESP) show a composition bias toward low complexity. Ser313 and Ser318 each carry phosphoserine. The residue at position 346 (Lys346) is an N6-acetyllysine. The segment at 348–398 (VGSTSVKSPSWQRPNQAAPSTGRISNSASSSGTGAPMKPAVGPPQPSDQDT) is disordered. Polar residues predominate over residues 349 to 380 (GSTSVKSPSWQRPNQAAPSTGRISNSASSSGT). Ser355 and Ser357 each carry phosphoserine. 3 LIM zinc-binding domains span residues 413–472 (PMCA…FFAP), 472–531 (PECG…LFGT), and 531–591 (TICR…SVNF).

Interacts with various PKC isoforms through the LIM domains. Interacts with actin and alpha-actinin through the PDZ domain. Interacts (via LIM domains) with SIPA1L1/SPAR; this interaction may occur preferentially with isoform 1. As to expression, detected in brain, in neurons, including in hippocampal neurons, and glial cells (at protein level). Detected in heart and skeletal muscle.

The protein resides in the postsynaptic density. It localises to the presynapse. The protein localises to the postsynapse. It is found in the cytoplasm. Its subcellular location is the cytosol. Functionally, may play an important role in the heart development by scaffolding PKC to the Z-disk region. May play a role in the regulation of cardiomyocyte expansion. Isoforms lacking the LIM domains may negatively modulate the scaffolding activity of isoform 1. Overexpression promotes the development of heart hypertrophy. Contributes to the regulation of dendritic spine morphogenesis in neurons. May be required to restrain postsynaptic growth of excitatory synapses. Isoform 1, but not isoform 2, expression favors spine thinning and elongation. The chain is PDZ and LIM domain protein 5 (Pdlim5) from Rattus norvegicus (Rat).